The primary structure comprises 1342 residues: DNA-directed RNA polymerase subunit beta (1342 aa).

Lysine 1022 and lysine 1200 each carry N6-acetyllysine.

Belongs to the RNA polymerase beta chain family. As to quaternary structure, the RNAP catalytic core consists of 2 alpha, 1 beta, 1 beta' and 1 omega subunit. When a sigma factor is associated with the core the holoenzyme is formed, which can initiate transcription.

The enzyme catalyses RNA(n) + a ribonucleoside 5'-triphosphate = RNA(n+1) + diphosphate. Functionally, DNA-dependent RNA polymerase catalyzes the transcription of DNA into RNA using the four ribonucleoside triphosphates as substrates. The protein is DNA-directed RNA polymerase subunit beta of Escherichia coli O6:K15:H31 (strain 536 / UPEC).